A 143-amino-acid polypeptide reads, in one-letter code: Beta/delta-urticatoxin-Uf2a (143 aa).

The signal sequence occupies residues 1–18; the sequence is MGAIVLVALMALVASSSA. Residues 19 to 80 constitute a propeptide that is removed on maturation; the sequence is FSDIEHNIMK…MMLSGRPQPN (62 aa). Intrachain disulfides connect Cys-83-Cys-100, Cys-90-Cys-105, Cys-99-Cys-113, Cys-115-Cys-129, Cys-122-Cys-134, and Cys-128-Cys-142.

The protein belongs to the urticatoxin-2 family. Expressed in trichomes, that are stiff epidermal hairs located on the surface of petioles and leaves.

The protein localises to the secreted. Plant defense neurotoxin that causes pain and systemic symptoms in mammals via modulation of voltage-gated sodium channels (Nav). Potent modulator of human Nav1.5/SCN5A (EC(50)=55 nM), Nav1.6/SCN8A (EC(50)=0.86 nM), and Nav1.7/SCN9A (EC(50)=208 nM), where it shifts the activation threshold to more negative potentials and delays fast inactivation. Also shifts the voltage-dependence of steady-state fast inactivation of Nav1.6/SCN8A, but not that of Nav1.5/SCN5A or Nav1.7/SCN9A. On Nav1.7/SCN9A, principally acts by binding to extracellular loops of domain IV (Nav site 3). Does not affect current response of the tetrodotoxin (TTX)-resistant Nav1.8/SCN10A sodium channel. In vivo, intraplantar injection into mice causes numerous dose-dependent, immediate, and long-lasting spontaneous pain behaviors, while no swelling is observed in the injected paw. At the highest doses tested, systemic symptoms including hypokinesia and hypersalivation are observed. This is Beta/delta-urticatoxin-Uf2a from Urtica ferox (Tree nettle).